The chain runs to 392 residues: Chorismate synthase (392 aa).

The NADP(+) site is built by arginine 39 and arginine 45. FMN-binding positions include 128 to 130 (RSS), 248 to 249 (QA), glycine 300, 315 to 319 (KPIPT), and arginine 341.

Belongs to the chorismate synthase family. As to quaternary structure, homotetramer. Requires FMNH2 as cofactor.

The enzyme catalyses 5-O-(1-carboxyvinyl)-3-phosphoshikimate = chorismate + phosphate. Its pathway is metabolic intermediate biosynthesis; chorismate biosynthesis; chorismate from D-erythrose 4-phosphate and phosphoenolpyruvate: step 7/7. Functionally, catalyzes the anti-1,4-elimination of the C-3 phosphate and the C-6 proR hydrogen from 5-enolpyruvylshikimate-3-phosphate (EPSP) to yield chorismate, which is the branch point compound that serves as the starting substrate for the three terminal pathways of aromatic amino acid biosynthesis. This reaction introduces a second double bond into the aromatic ring system. The sequence is that of Chorismate synthase from Trichlorobacter lovleyi (strain ATCC BAA-1151 / DSM 17278 / SZ) (Geobacter lovleyi).